Reading from the N-terminus, the 272-residue chain is DNA repair protein RecO (272 aa).

This sequence belongs to the RecO family.

Involved in DNA repair and RecF pathway recombination. The chain is DNA repair protein RecO from Latilactobacillus sakei subsp. sakei (strain 23K) (Lactobacillus sakei subsp. sakei).